Here is a 241-residue protein sequence, read N- to C-terminus: Lactate utilization protein C (241 aa).

Belongs to the LutC/YkgG family.

Its function is as follows. Is involved in L-lactate degradation and allows cells to grow with lactate as the sole carbon source. This is Lactate utilization protein C from Geobacillus sp. (strain WCH70).